Reading from the N-terminus, the 358-residue chain is tRNA-specific 2-thiouridylase MnmA (358 aa).

ATP is bound by residues 7–14 (AMSGGVDS) and Leu33. Cys101 serves as the catalytic Nucleophile. Cys101 and Cys197 form a disulfide bridge. Residue Gly125 coordinates ATP. The interval 147–149 (KDQ) is interaction with tRNA. Residue Cys197 is the Cysteine persulfide intermediate of the active site.

The protein belongs to the MnmA/TRMU family.

It localises to the cytoplasm. The enzyme catalyses S-sulfanyl-L-cysteinyl-[protein] + uridine(34) in tRNA + AH2 + ATP = 2-thiouridine(34) in tRNA + L-cysteinyl-[protein] + A + AMP + diphosphate + H(+). In terms of biological role, catalyzes the 2-thiolation of uridine at the wobble position (U34) of tRNA, leading to the formation of s(2)U34. This is tRNA-specific 2-thiouridylase MnmA from Rickettsia prowazekii (strain Madrid E).